We begin with the raw amino-acid sequence, 406 residues long: Flavohemoprotein (406 aa).

The Globin domain maps to V6–K144. H91 lines the heme b pocket. Active-site charge relay system residues include Y101 and E143. Positions G155–K406 are reductase. An FAD-binding FR-type domain is found at T158–D267. FAD is bound by residues Y196 and R212 to S215. G280–P285 provides a ligand contact to NADP(+). Residue L397 to P400 participates in FAD binding.

This sequence belongs to the globin family. Two-domain flavohemoproteins subfamily. In the C-terminal section; belongs to the flavoprotein pyridine nucleotide cytochrome reductase family. Heme b serves as cofactor. FAD is required as a cofactor.

It catalyses the reaction 2 nitric oxide + NADPH + 2 O2 = 2 nitrate + NADP(+) + H(+). It carries out the reaction 2 nitric oxide + NADH + 2 O2 = 2 nitrate + NAD(+) + H(+). Is involved in NO detoxification in an aerobic process, termed nitric oxide dioxygenase (NOD) reaction that utilizes O(2) and NAD(P)H to convert NO to nitrate, which protects the bacterium from various noxious nitrogen compounds. Therefore, plays a central role in the inducible response to nitrosative stress. This Oceanobacillus iheyensis (strain DSM 14371 / CIP 107618 / JCM 11309 / KCTC 3954 / HTE831) protein is Flavohemoprotein.